The sequence spans 33 residues: Cytochrome b6-f complex subunit 8 (33 aa).

The chain crosses the membrane as a helical span at residues 2–22 (LFTLGWASLAAMFSFSIAMVV).

Belongs to the PetN family. In terms of assembly, the 4 large subunits of the cytochrome b6-f complex are cytochrome b6, subunit IV (17 kDa polypeptide, PetD), cytochrome f and the Rieske protein, while the 4 small subunits are PetG, PetL, PetM and PetN. The complex functions as a dimer.

The protein localises to the cellular thylakoid membrane. Functionally, component of the cytochrome b6-f complex, which mediates electron transfer between photosystem II (PSII) and photosystem I (PSI), cyclic electron flow around PSI, and state transitions. The protein is Cytochrome b6-f complex subunit 8 of Synechococcus sp. (strain CC9605).